A 343-amino-acid chain; its full sequence is Dimethyladenosine transferase 1, mitochondrial (343 aa).

A mitochondrion-targeting transit peptide spans 1 to 27 (MAASGKLSTWRLPPLPTIREIIKLLRV). S-adenosyl-L-methionine is bound by residues Leu-38, Gly-63, Glu-85, Lys-86, Asp-111, Val-112, and Asn-141.

This sequence belongs to the class I-like SAM-binding methyltransferase superfamily. rRNA adenine N(6)-methyltransferase family. KsgA subfamily. In terms of assembly, interacts with mitochondrial RNA polymerase POLRMT. Interacts with TFAM. Bound to the maturing mtSSU until the late stages of assembly.

The protein localises to the mitochondrion. The enzyme catalyses adenosine(N)/adenosine(N+1) in rRNA + 4 S-adenosyl-L-methionine = N(6)-dimethyladenosine(N)/N(6)-dimethyladenosine(N+1) in rRNA + 4 S-adenosyl-L-homocysteine + 4 H(+). Functionally, S-adenosyl-L-methionine-dependent methyltransferase which specifically dimethylates mitochondrial 12S rRNA at the conserved stem loop. Also required for basal transcription of mitochondrial DNA, probably via its interaction with POLRMT and TFAM. Stimulates transcription independently of the methyltransferase activity. Its function is as follows. Mitochondrial methyltransferase which uses S-adenosyl methionine to dimethylate two highly conserved adjacent adenosine residues (A1583 and A1584) within the loop of helix 45 at the 3-prime end of 12S rRNA, thereby regulating the assembly or stability of the small subunit of the mitochondrial ribosome. Also required for basal transcription of mitochondrial DNA, probably via its interaction with POLRMT and TFAM. Stimulates transcription independently of the methyltransferase activity. This Pongo abelii (Sumatran orangutan) protein is Dimethyladenosine transferase 1, mitochondrial (TFB1M).